Reading from the N-terminus, the 59-residue chain is Large ribosomal subunit protein bL32 (59 aa).

The span at 1 to 16 shows a compositional bias: basic residues; the sequence is MAVPKRKTSPSRRGMR. A disordered region spans residues 1-20; the sequence is MAVPKRKTSPSRRGMRRSHD.

The protein belongs to the bacterial ribosomal protein bL32 family.

The protein is Large ribosomal subunit protein bL32 of Novosphingobium aromaticivorans (strain ATCC 700278 / DSM 12444 / CCUG 56034 / CIP 105152 / NBRC 16084 / F199).